Consider the following 478-residue polypeptide: Sulfate adenylyltransferase subunit 1 (478 aa).

Positions 24–240 (KSMLRFLTCG…VLEDIDIDAD (217 aa)) constitute a tr-type G domain. The tract at residues 33-40 (GSVDDGKS) is G1. Residue 33–40 (GSVDDGKS) coordinates GTP. The G2 stretch occupies residues 91-95 (GITID). The G3 stretch occupies residues 112–115 (DTPG). GTP-binding positions include 112-116 (DTPGH) and 167-170 (NKMD). Residues 167–170 (NKMD) are G4. The segment at 206–208 (SAL) is G5.

This sequence belongs to the TRAFAC class translation factor GTPase superfamily. Classic translation factor GTPase family. CysN/NodQ subfamily. As to quaternary structure, heterodimer composed of CysD, the smaller subunit, and CysN.

It catalyses the reaction sulfate + ATP + H(+) = adenosine 5'-phosphosulfate + diphosphate. The protein operates within sulfur metabolism; hydrogen sulfide biosynthesis; sulfite from sulfate: step 1/3. Functionally, with CysD forms the ATP sulfurylase (ATPS) that catalyzes the adenylation of sulfate producing adenosine 5'-phosphosulfate (APS) and diphosphate, the first enzymatic step in sulfur assimilation pathway. APS synthesis involves the formation of a high-energy phosphoric-sulfuric acid anhydride bond driven by GTP hydrolysis by CysN coupled to ATP hydrolysis by CysD. The polypeptide is Sulfate adenylyltransferase subunit 1 (Aliivibrio salmonicida (strain LFI1238) (Vibrio salmonicida (strain LFI1238))).